Here is a 279-residue protein sequence, read N- to C-terminus: Ribonuclease T2 protein rnst-2 (279 aa).

A signal peptide spans 1–17 (MKLLLLLCISCIPLAYS). Residues Cys37 and Cys48 are joined by a disulfide bond. His60 is an active-site residue. Asn68 carries N-linked (GlcNAc...) asparagine glycosylation. Residues Glu114 and His118 contribute to the active site. An intrachain disulfide couples Cys200 to Cys210.

It belongs to the RNase T2 family. Expressed in the pharynx, hypodermis, muscle cells, sheath cells, intestinal cells, the vulva and tail regions.

The protein resides in the lysosome. The enzyme catalyses a ribonucleotidyl-ribonucleotide-RNA + H2O = a 3'-end 3'-phospho-ribonucleotide-RNA + a 5'-end dephospho-ribonucleoside-RNA + H(+). Its function is as follows. Probable endoribonuclease involved in the autophagy-mediated degradation of ribosomal RNA and ribosomal proteins in lysosomes. The chain is Ribonuclease T2 protein rnst-2 from Caenorhabditis elegans.